Consider the following 252-residue polypeptide: MSDWNPSLYLHFAAERSRPAVELLARVSLENIEYIADLGCGPGNSTALLHQRWPAARITGIDSSPAMIAEARSALPDCLFVEADIRNWQPEQALDLIFANASLQWLPDHYELFPHLVSLLSPLGVLAVQMPDNWLEPTHVLMREVAWEQNYPDRGREPLAGVHAYYDILSEAGCEVDIWRTTYYHQMPSHQAIIDWVTATGLRPWLQDLTESEQQHFLTRYHQMLEEQYPLQENGQILLAFPRLFIVARRTE.

This sequence belongs to the methyltransferase superfamily. Tam family.

Its subcellular location is the cytoplasm. It catalyses the reaction trans-aconitate + S-adenosyl-L-methionine = (E)-3-(methoxycarbonyl)pent-2-enedioate + S-adenosyl-L-homocysteine. In terms of biological role, catalyzes the S-adenosylmethionine monomethyl esterification of trans-aconitate. This chain is Trans-aconitate 2-methyltransferase, found in Escherichia coli (strain UTI89 / UPEC).